The primary structure comprises 357 residues: Cobalt-precorrin-5B C(1)-methyltransferase (357 aa).

It belongs to the CbiD family.

The catalysed reaction is Co-precorrin-5B + S-adenosyl-L-methionine = Co-precorrin-6A + S-adenosyl-L-homocysteine. The protein operates within cofactor biosynthesis; adenosylcobalamin biosynthesis; cob(II)yrinate a,c-diamide from sirohydrochlorin (anaerobic route): step 6/10. Functionally, catalyzes the methylation of C-1 in cobalt-precorrin-5B to form cobalt-precorrin-6A. The sequence is that of Cobalt-precorrin-5B C(1)-methyltransferase from Rhodospirillum rubrum (strain ATCC 11170 / ATH 1.1.1 / DSM 467 / LMG 4362 / NCIMB 8255 / S1).